We begin with the raw amino-acid sequence, 203 residues long: Adenylyl-sulfate kinase (203 aa).

35 to 42 (GLSGSGKS) lines the ATP pocket. S109 serves as the catalytic Phosphoserine intermediate.

It belongs to the APS kinase family.

It catalyses the reaction adenosine 5'-phosphosulfate + ATP = 3'-phosphoadenylyl sulfate + ADP + H(+). Its pathway is sulfur metabolism; hydrogen sulfide biosynthesis; sulfite from sulfate: step 2/3. Functionally, catalyzes the synthesis of activated sulfate. The chain is Adenylyl-sulfate kinase from Geotalea daltonii (strain DSM 22248 / JCM 15807 / FRC-32) (Geobacter daltonii).